Here is a 329-residue protein sequence, read N- to C-terminus: Phosphate acetyltransferase (329 aa).

This sequence belongs to the phosphate acetyltransferase and butyryltransferase family.

It is found in the cytoplasm. It catalyses the reaction acetyl-CoA + phosphate = acetyl phosphate + CoA. It functions in the pathway metabolic intermediate biosynthesis; acetyl-CoA biosynthesis; acetyl-CoA from acetate: step 2/2. The chain is Phosphate acetyltransferase (pta) from Staphylococcus epidermidis (strain ATCC 35984 / DSM 28319 / BCRC 17069 / CCUG 31568 / BM 3577 / RP62A).